We begin with the raw amino-acid sequence, 257 residues long: Caspase-14 (257 aa).

Residues His93 and Cys136 contribute to the active site. Residues 156 to 167 (DEELGGDEVAVL) constitute a propeptide that is removed on maturation.

The protein belongs to the peptidase C14A family. As to quaternary structure, heterodimer of a large and a small subunit, both processed from the precursor; the mature active form is a p17/p10 dimer and the intermediate form a p20/p8 dimer. Post-translationally, maturation by proteolytic processing appears to be a two-step process. The precursor is processed by KLK7 to yield the p20/p8 intermediate form which acts the precursor to yield the p17/p10 mature form. Initially it was reported that cleavage by granzyme B, caspase-8 and -10 generates the two active subunits, however the physiological relevance has not been established. Embryo, adult liver and less in adult brain and kidney. Expressed in differentiating keratinocytes of embryonic skin (at protein level). Expressed in keratinocytes of adult skin suprabasal layers (at protein level).

The protein localises to the cytoplasm. The protein resides in the nucleus. Its function is as follows. Non-apoptotic caspase which is involved in epidermal differentiation. Seems to play a role in keratinocyte differentiation and is required for cornification. Regulates maturation of the epidermis by proteolytically processing filaggrin. In vitro is equally active on the synthetic caspase substrates WEHD-ACF and IETD-AFC. Involved in processing of prosaposin in the epidermis. May be involved in retinal pigment epithelium cell barrier function. This Mus musculus (Mouse) protein is Caspase-14 (Casp14).